Here is a 582-residue protein sequence, read N- to C-terminus: Phosphoribosylaminoimidazole carboxylase (582 aa).

The ATP-grasp domain occupies 114-305; sequence KKYLAERGVA…QFENHLRAIL (192 aa). 143–200 contacts ATP; that stretch reads AGRLGLPLMLKAKTLAYDGRGNSPLKSASSGDIQASLKFLGDRPLYAEGWAPFVKEVA.

In the C-terminal section; belongs to the AIR carboxylase family. Class I subfamily.

The enzyme catalyses 5-amino-1-(5-phospho-D-ribosyl)imidazole-4-carboxylate + H(+) = 5-amino-1-(5-phospho-beta-D-ribosyl)imidazole + CO2. The protein operates within purine metabolism; IMP biosynthesis via de novo pathway; 5-amino-1-(5-phospho-D-ribosyl)imidazole-4-carboxylate from 5-amino-1-(5-phospho-D-ribosyl)imidazole (carboxylase route): step 1/1. The chain is Phosphoribosylaminoimidazole carboxylase (ADE2) from Cryptococcus neoformans var. neoformans serotype D (strain JEC21 / ATCC MYA-565) (Filobasidiella neoformans).